Reading from the N-terminus, the 363-residue chain is MKKLTLVLFGMLFLASSAHAARIKDVAKVAGVRSNQLVGYGLVTGLPGTGETTPFTDQTFNAMLQNFGIQLPPGTKPKTKNVAAVIVTAELPAFSKQGQEVDVTVSSIGSAKSLRGGTLLQTFLKGLDGQVYAVAQGNLVVSGFSAQGNDGSKLVGNNPNVGIISSGATVEQEIPTPFGRGDYITFNLIQSDFTTAQRLADAVNNFLGPQMASAVDATSVKVRAPREISQRVAFLSAIENIEFDPAEGSAKIIVNSRTGTIVVGKHVRLKAAAVTHGGMTVAIKENLNVSQPNAFSGGQTVVVPDSDIEVTEADGKMFKFEPGLTLDDLVRAVNEVGAAPSDLMAILQALKQAGAIEGQLIII.

Residues 1–20 (MKKLTLVLFGMLFLASSAHA) form the signal peptide.

The protein belongs to the FlgI family. The basal body constitutes a major portion of the flagellar organelle and consists of four rings (L,P,S, and M) mounted on a central rod.

It is found in the periplasm. The protein resides in the bacterial flagellum basal body. Assembles around the rod to form the L-ring and probably protects the motor/basal body from shearing forces during rotation. The sequence is that of Flagellar P-ring protein from Vibrio atlanticus (strain LGP32) (Vibrio splendidus (strain Mel32)).